The primary structure comprises 416 residues: Lipoyl synthase, mitochondrial (416 aa).

The transit peptide at 1 to 33 directs the protein to the mitochondrion; that stretch reads MAAASTNRLRLLYTSTRASLPQSTPSILTTRTY. A disordered region spans residues 20–52; the sequence is LPQSTPSILTTRTYATTDSSTSATSTPKPRRRT. The span at 29-46 shows a compositional bias: low complexity; sequence TTRTYATTDSSTSATSTP. [4Fe-4S] cluster contacts are provided by Cys133, Cys138, Cys144, Cys164, Cys168, Cys171, and Ser379. In terms of domain architecture, Radical SAM core spans 147-368; that stretch reads GGDKAAATAT…QRRAEELGFL (222 aa).

This sequence belongs to the radical SAM superfamily. Lipoyl synthase family. [4Fe-4S] cluster is required as a cofactor.

Its subcellular location is the mitochondrion. The enzyme catalyses [[Fe-S] cluster scaffold protein carrying a second [4Fe-4S](2+) cluster] + N(6)-octanoyl-L-lysyl-[protein] + 2 oxidized [2Fe-2S]-[ferredoxin] + 2 S-adenosyl-L-methionine + 4 H(+) = [[Fe-S] cluster scaffold protein] + N(6)-[(R)-dihydrolipoyl]-L-lysyl-[protein] + 4 Fe(3+) + 2 hydrogen sulfide + 2 5'-deoxyadenosine + 2 L-methionine + 2 reduced [2Fe-2S]-[ferredoxin]. It functions in the pathway protein modification; protein lipoylation via endogenous pathway; protein N(6)-(lipoyl)lysine from octanoyl-[acyl-carrier-protein]: step 2/2. Functionally, catalyzes the radical-mediated insertion of two sulfur atoms into the C-6 and C-8 positions of the octanoyl moiety bound to the lipoyl domains of lipoate-dependent enzymes, thereby converting the octanoylated domains into lipoylated derivatives. The sequence is that of Lipoyl synthase, mitochondrial from Aspergillus niger (strain ATCC MYA-4892 / CBS 513.88 / FGSC A1513).